The following is a 224-amino-acid chain: Ribose-5-phosphate isomerase A (224 aa).

Substrate-binding positions include 26-29, 82-85, and 95-98; these read TGST, DGAD, and KGGG. The active-site Proton acceptor is the Glu-104. Lys-122 contacts substrate.

This sequence belongs to the ribose 5-phosphate isomerase family. Homodimer.

It carries out the reaction aldehydo-D-ribose 5-phosphate = D-ribulose 5-phosphate. It functions in the pathway carbohydrate degradation; pentose phosphate pathway; D-ribose 5-phosphate from D-ribulose 5-phosphate (non-oxidative stage): step 1/1. Its function is as follows. Catalyzes the reversible conversion of ribose-5-phosphate to ribulose 5-phosphate. The sequence is that of Ribose-5-phosphate isomerase A from Lactococcus lactis subsp. cremoris (strain SK11).